The primary structure comprises 2253 residues: Polycystin family receptor for egg jelly (2253 aa).

Residues 1-19 form the signal peptide; sequence MRPGPALLLLGVGLSLSVG. Over 20 to 1184 the chain is Extracellular; sequence RLPLPPVPRG…NIIKSLHQNP (1165 aa). Low complexity predominate over residues 154–169; sequence RPASPAARVSPRSAAP. The tract at residues 154–177 is disordered; that stretch reads RPASPAARVSPRSAAPGPRPQQGF. N-linked (GlcNAc...) asparagine glycosylation is found at asparagine 197, asparagine 242, asparagine 295, asparagine 306, asparagine 345, asparagine 349, asparagine 481, asparagine 674, asparagine 849, asparagine 890, asparagine 923, asparagine 939, asparagine 958, and asparagine 965. Residues 215 to 913 enclose the REJ domain; the sequence is CVIQRVRINT…STMFCDFTND (699 aa). Residues 1185-1205 form a helical membrane-spanning segment; that stretch reads VTLFTVLFIILLYVGLAFWAL. Residues 1206–1389 lie on the Cytoplasmic side of the membrane; that stretch reads YRDEMDQHLR…VAKTFNRLQR (184 aa). The PLAT domain maps to 1230–1347; it reads LCYLVTIFTG…TLDRTFHVTH (118 aa). Residues 1390–1410 traverse the membrane as a helical segment; it reads LSCCLAMLLSSLLCNIMFFNL. Topologically, residues 1411–1427 are extracellular; it reads NRQEQTESRERKYMRSM. Residues 1428-1448 form a helical membrane-spanning segment; sequence MIGIESVLITIPVQLLITFLF. At 1449–1576 the chain is on the cytoplasmic side; that stretch reads TCSQRKPQAD…KPRIVLPWWC (128 aa). Positions 1494-1562 are disordered; the sequence is PREVAKPASK…EQHPSQKDLQ (69 aa). Over residues 1517–1527 the composition is skewed to basic residues; the sequence is SKPKHRHRKAQ. Basic and acidic residues predominate over residues 1549 to 1558; the sequence is DVHSEQHPSQ. The helical transmembrane segment at 1577-1597 threads the bilayer; sequence VYVAWFLVFATSSISSFFIVF. At 1598-1607 the chain is on the extracellular side; it reads YGLTYGYDKS. A helical membrane pass occupies residues 1608-1628; it reads IEWLFASFCSFCQSVLLVQPS. Residues 1629–1708 lie on the Cytoplasmic side of the membrane; that stretch reads KIILLSGFRT…RKKRIKRRAL (80 aa). Residues 1709–1729 traverse the membrane as a helical segment; the sequence is LFLSYILTHFIFLALLLILIV. At 1730 to 1966 the chain is on the extracellular side; the sequence is LLRHTDCFYY…FDRKASAEIY (237 aa). N-linked (GlcNAc...) asparagine glycosylation is found at asparagine 1836, asparagine 1893, and asparagine 1944. Residues 1967–1987 form a helical membrane-spanning segment; it reads LYVAILIFFLAYVVDEGCIIM. The Cytoplasmic portion of the chain corresponds to 1988-1996; sequence QERASYVRS. A helical transmembrane segment spans residues 1997–2017; sequence VYNLLNFALKCIFTVLIVLFL. Residues 2018 to 2042 lie on the Extracellular side of the membrane; it reads RKHFLATGIIRFYLSNPEDFIPFHA. The chain crosses the membrane as a helical span at residues 2043-2063; the sequence is VSQVDHIMRIILGFLLFLTIL. The Cytoplasmic segment spans residues 2064–2091; it reads KTLRYSRFFYDVRLAQRAIQAALPGICH. The chain crosses the membrane as a helical span at residues 2092 to 2112; that stretch reads MAFVVSVYFFVYMAFGYLVFG. Residues 2113-2145 lie on the Extracellular side of the membrane; sequence QHEWNYSNLIHSTQTVFSYCVSAFQNTEFSNNR. A helical transmembrane segment spans residues 2146–2166; the sequence is ILGVLFLSSFMLVMICVLINL. Residues 2167–2253 lie on the Cytoplasmic side of the membrane; the sequence is FQAVILSAYE…NGKKMVYLVV (87 aa).

Belongs to the polycystin family. In terms of tissue distribution, exclusively expressed in testis.

The protein localises to the cell membrane. The protein resides in the cytoplasmic vesicle. It localises to the secretory vesicle. Its subcellular location is the acrosome membrane. It is found in the nucleus. Functionally, testis-specific protein that controls sperm transport and the timing of zona pellucida-evoked exocytosis of the sperm acrosome. The polypeptide is Polycystin family receptor for egg jelly (Homo sapiens (Human)).